A 258-amino-acid chain; its full sequence is tRNA pseudouridine synthase A (258 aa).

D52 acts as the Nucleophile in catalysis. Residue Y111 participates in substrate binding.

This sequence belongs to the tRNA pseudouridine synthase TruA family. Homodimer.

It carries out the reaction uridine(38/39/40) in tRNA = pseudouridine(38/39/40) in tRNA. In terms of biological role, formation of pseudouridine at positions 38, 39 and 40 in the anticodon stem and loop of transfer RNAs. This is tRNA pseudouridine synthase A from Azorhizobium caulinodans (strain ATCC 43989 / DSM 5975 / JCM 20966 / LMG 6465 / NBRC 14845 / NCIMB 13405 / ORS 571).